The primary structure comprises 141 residues: Large ribosomal subunit protein uL11 (141 aa).

Belongs to the universal ribosomal protein uL11 family. In terms of assembly, part of the ribosomal stalk of the 50S ribosomal subunit. Interacts with L10 and the large rRNA to form the base of the stalk. L10 forms an elongated spine to which L12 dimers bind in a sequential fashion forming a multimeric L10(L12)X complex. In terms of processing, one or more lysine residues are methylated.

Functionally, forms part of the ribosomal stalk which helps the ribosome interact with GTP-bound translation factors. The sequence is that of Large ribosomal subunit protein uL11 from Tropheryma whipplei (strain TW08/27) (Whipple's bacillus).